The primary structure comprises 267 residues: Probable aquaporin TIP3-2 (267 aa).

The residue at position 1 (M1) is an N-acetylmethionine. A2 is modified (N-acetylalanine; in Probable aquaporin TIP3-2, N-terminally processed). The Cytoplasmic portion of the chain corresponds to 2–26 (ATSARRAYGFGRADEATHPDSIRAT). The chain crosses the membrane as a helical span at residues 27–47 (LAEFLSTFVFVFAGEGSILAL). Residues 48–66 (DKLYWDTAAHTGTNTPGGL) are Vacuolar-facing. The chain crosses the membrane as a helical span at residues 67-87 (VLVALAHALALFAAVSAAINV). Topologically, residues 88–110 (SGGHVNPAVTFAALIGGRISVIR) are cytoplasmic. Positions 93-95 (NPA) match the NPA 1 motif. A helical membrane pass occupies residues 111-131 (AIYYWVAQLIGAILACLLLRL). Over 132–151 (ATNGLRPVGFHVASGVSELH) the chain is Vacuolar. Residues 152 to 172 (GLLMEIILTFALVYVVYSTAI) form a helical membrane-spanning segment. Residues 173-178 (DPKRGS) lie on the Cytoplasmic side of the membrane. Residues 179-199 (IGIIAPLAIGLIVGANILVGG) form a helical membrane-spanning segment. The Vacuolar portion of the chain corresponds to 200-226 (PFDGASMNPARAFGPALVGWRWSNHWI). The NPA 2 motif lies at 207-209 (NPA). Residues 227–247 (YWVGPFIGGALAALIYEYMII) form a helical membrane-spanning segment. Topologically, residues 248–267 (PSVNEPPHHSTHQPLAPEDY) are cytoplasmic.

The protein belongs to the MIP/aquaporin (TC 1.A.8) family. TIP (TC 1.A.8.10) subfamily. As to expression, predominantly expressed in developing seeds. Also expressed in rosette leaves.

The protein localises to the vacuole membrane. Functionally, aquaporins facilitate the transport of water and small neutral solutes across cell membranes. The chain is Probable aquaporin TIP3-2 (TIP3-2) from Arabidopsis thaliana (Mouse-ear cress).